Reading from the N-terminus, the 154-residue chain is Myoglobin (154 aa).

The Globin domain maps to 2-148; sequence GLSDGEWQQV…FRNDIAAKYK (147 aa). The residue at position 4 (Ser4) is a Phosphoserine. His65 contributes to the nitrite binding site. His65 contacts O2. Heme b is bound at residue His94.

It belongs to the globin family. In terms of assembly, monomeric.

The protein resides in the cytoplasm. It is found in the sarcoplasm. The catalysed reaction is Fe(III)-heme b-[protein] + nitric oxide + H2O = Fe(II)-heme b-[protein] + nitrite + 2 H(+). It carries out the reaction H2O2 + AH2 = A + 2 H2O. In terms of biological role, monomeric heme protein which primary function is to store oxygen and facilitate its diffusion within muscle tissues. Reversibly binds oxygen through a pentacoordinated heme iron and enables its timely and efficient release as needed during periods of heightened demand. Depending on the oxidative conditions of tissues and cells, and in addition to its ability to bind oxygen, it also has a nitrite reductase activity whereby it regulates the production of bioactive nitric oxide. Under stress conditions, like hypoxia and anoxia, it also protects cells against reactive oxygen species thanks to its pseudoperoxidase activity. The chain is Myoglobin (MB) from Equus quagga burchellii (Burchell's zebra).